The chain runs to 146 residues: Inner membrane protein YdgK (146 aa).

The Cytoplasmic portion of the chain corresponds to methionine 1–tryptophan 12. Residues leucine 13–leucine 33 traverse the membrane as a helical segment. Residues tyrosine 34–glycine 59 are Periplasmic-facing. The helical transmembrane segment at valine 60–phenylalanine 80 threads the bilayer. Residues lysine 81–histidine 89 lie on the Cytoplasmic side of the membrane. Residues tyrosine 90–valine 110 traverse the membrane as a helical segment. Topologically, residues glutamate 111–aspartate 112 are periplasmic. The helical transmembrane segment at glycine 113 to phenylalanine 133 threads the bilayer. Residues lysine 134–proline 146 are Cytoplasmic-facing.

It to Synechocystis PCC 6803 sll0481.

Its subcellular location is the cell inner membrane. The polypeptide is Inner membrane protein YdgK (ydgK) (Escherichia coli (strain K12)).